The following is a 412-amino-acid chain: Putative competence-damage inducible protein (412 aa).

This sequence belongs to the CinA family.

The sequence is that of Putative competence-damage inducible protein from Bacillus cereus (strain AH187).